We begin with the raw amino-acid sequence, 204 residues long: Protein-L-isoaspartate O-methyltransferase (204 aa).

This sequence belongs to the methyltransferase superfamily. L-isoaspartyl/D-aspartyl protein methyltransferase family. As to quaternary structure, monomer.

Its subcellular location is the cytoplasm. It carries out the reaction [protein]-L-isoaspartate + S-adenosyl-L-methionine = [protein]-L-isoaspartate alpha-methyl ester + S-adenosyl-L-homocysteine. Catalyzes the methyl esterification of L-isoaspartyl residues in peptides and proteins that result from spontaneous decomposition of normal L-aspartyl and L-asparaginyl residues. It plays a role in the repair and/or degradation of damaged proteins. This is Protein-L-isoaspartate O-methyltransferase (pcm) from Rhizobium meliloti (strain 1021) (Ensifer meliloti).